Reading from the N-terminus, the 446-residue chain is Probable glycine dehydrogenase (decarboxylating) subunit 1 (446 aa).

The protein belongs to the GcvP family. N-terminal subunit subfamily. As to quaternary structure, the glycine cleavage system is composed of four proteins: P, T, L and H. In this organism, the P 'protein' is a heterodimer of two subunits.

It catalyses the reaction N(6)-[(R)-lipoyl]-L-lysyl-[glycine-cleavage complex H protein] + glycine + H(+) = N(6)-[(R)-S(8)-aminomethyldihydrolipoyl]-L-lysyl-[glycine-cleavage complex H protein] + CO2. Its function is as follows. The glycine cleavage system catalyzes the degradation of glycine. The P protein binds the alpha-amino group of glycine through its pyridoxal phosphate cofactor; CO(2) is released and the remaining methylamine moiety is then transferred to the lipoamide cofactor of the H protein. This Desulfitobacterium hafniense (strain DSM 10664 / DCB-2) protein is Probable glycine dehydrogenase (decarboxylating) subunit 1.